Consider the following 365-residue polypeptide: tRNA-specific 2-thiouridylase MnmA (365 aa).

ATP contacts are provided by residues 14 to 21 (AMSGGVDS) and L40. C108 acts as the Nucleophile in catalysis. C108 and C204 are oxidised to a cystine. G132 is an ATP binding site. An interaction with tRNA region spans residues 154–156 (KDQ). The Cysteine persulfide intermediate role is filled by C204.

It belongs to the MnmA/TRMU family.

It is found in the cytoplasm. The catalysed reaction is S-sulfanyl-L-cysteinyl-[protein] + uridine(34) in tRNA + AH2 + ATP = 2-thiouridine(34) in tRNA + L-cysteinyl-[protein] + A + AMP + diphosphate + H(+). In terms of biological role, catalyzes the 2-thiolation of uridine at the wobble position (U34) of tRNA, leading to the formation of s(2)U34. The polypeptide is tRNA-specific 2-thiouridylase MnmA (Rickettsia africae (strain ESF-5)).